Here is a 287-residue protein sequence, read N- to C-terminus: 4-hydroxybenzoate octaprenyltransferase (287 aa).

9 helical membrane-spanning segments follow: residues 22-42 (IGTY…SDGW), 45-65 (LQLL…GCVI), 95-115 (AINL…MLSW), 116-136 (STIY…FMKR), 140-160 (LPQL…FSEA), 162-182 (GEIP…TIAY), 214-234 (IGFL…ILAF), 237-257 (PYQL…LLIV), and 264-284 (CFQA…GIAI).

Belongs to the UbiA prenyltransferase family. It depends on Mg(2+) as a cofactor.

It localises to the cell inner membrane. The enzyme catalyses all-trans-octaprenyl diphosphate + 4-hydroxybenzoate = 4-hydroxy-3-(all-trans-octaprenyl)benzoate + diphosphate. It functions in the pathway cofactor biosynthesis; ubiquinone biosynthesis. Its function is as follows. Catalyzes the prenylation of para-hydroxybenzoate (PHB) with an all-trans polyprenyl group. Mediates the second step in the final reaction sequence of ubiquinone-8 (UQ-8) biosynthesis, which is the condensation of the polyisoprenoid side chain with PHB, generating the first membrane-bound Q intermediate 3-octaprenyl-4-hydroxybenzoate. This Colwellia psychrerythraea (strain 34H / ATCC BAA-681) (Vibrio psychroerythus) protein is 4-hydroxybenzoate octaprenyltransferase.